Consider the following 455-residue polypeptide: Cysteine--tRNA ligase (455 aa).

C28 is a binding site for Zn(2+). The 'HIGH' region motif lies at 30-40 (MTVYDYCHLGH). Zn(2+) is bound by residues C209, H234, and E238. The short motif at 266–270 (KMSKS) is the 'KMSKS' region element. Residue K269 coordinates ATP.

It belongs to the class-I aminoacyl-tRNA synthetase family. Monomer. The cofactor is Zn(2+).

The protein localises to the cytoplasm. It catalyses the reaction tRNA(Cys) + L-cysteine + ATP = L-cysteinyl-tRNA(Cys) + AMP + diphosphate. The sequence is that of Cysteine--tRNA ligase from Methylobacillus flagellatus (strain ATCC 51484 / DSM 6875 / VKM B-1610 / KT).